Here is a 491-residue protein sequence, read N- to C-terminus: Transcription factor unc-3 (491 aa).

The tract at residues 66–69 (RKSN) is interaction with DNA. A C5-type zinc finger spans residues 154–173 (CRVLLTHEVMCSRCCEKKSC). Interaction with DNA regions lie at residues 200–207 (NCLKNAGN) and 239–242 (NNSK). The interval 240–261 (NSKHGRRTKRTDASDDSEYSES) is disordered. The IPT/TIG domain occupies 269–355 (PVIKALFPSE…SRGTPLRFSY (87 aa)).

Belongs to the COE family. As to quaternary structure, may homodimerise. Interacts with jmjd-3.1. May interact with GFI1 homolog pag-3.

The protein localises to the nucleus. Transcription factor. Involved in motor neuron fate determination and maintenance, acting as an activator of gene expression in a subset of motor neurons. May act in concert with GFI1 homolog pag-3 in motor neuron fate determination. Required to maintain the expression of transcriptional repressors bnc-1 and cfi-1, which play roles in the cell fate of motor neurons. May play a role in the expression of proteins essential for axonal pathfinding and/or neuronal differentiation in both sensory and motor neurons. Cooperates with jmjd-3.1 and wdr-5.1 to ensure robust transdifferentiation of the Y rectal cell to the PDA motor neuron during larval development. The chain is Transcription factor unc-3 (unc-3) from Caenorhabditis elegans.